The sequence spans 276 residues: Undecaprenyl-diphosphatase (276 aa).

The next 6 helical transmembrane spans lie at 43–63 (RAMA…VWEF), 85–105 (GNLL…ADLI), 109–129 (LFNP…MLWA), 183–203 (AATE…AVYS), 214–234 (GDLP…MIAV), and 249–269 (FAWY…FGWV).

Belongs to the UppP family.

Its subcellular location is the cell inner membrane. It carries out the reaction di-trans,octa-cis-undecaprenyl diphosphate + H2O = di-trans,octa-cis-undecaprenyl phosphate + phosphate + H(+). Functionally, catalyzes the dephosphorylation of undecaprenyl diphosphate (UPP). Confers resistance to bacitracin. This chain is Undecaprenyl-diphosphatase, found in Pseudomonas putida (strain ATCC 700007 / DSM 6899 / JCM 31910 / BCRC 17059 / LMG 24140 / F1).